We begin with the raw amino-acid sequence, 156 residues long: Transcription elongation factor GreA (156 aa).

Residues 1–32 (MKKVRLTREGYEKLKKELEDLKRKFMYEISER) are a coiled coil.

Belongs to the GreA/GreB family.

Its function is as follows. Necessary for efficient RNA polymerase transcription elongation past template-encoded arresting sites. The arresting sites in DNA have the property of trapping a certain fraction of elongating RNA polymerases that pass through, resulting in locked ternary complexes. Cleavage of the nascent transcript by cleavage factors such as GreA or GreB allows the resumption of elongation from the new 3'terminus. GreA releases sequences of 2 to 3 nucleotides. This chain is Transcription elongation factor GreA, found in Thermotoga maritima (strain ATCC 43589 / DSM 3109 / JCM 10099 / NBRC 100826 / MSB8).